The following is a 208-amino-acid chain: Large ribosomal subunit protein bL25 (208 aa).

The disordered stretch occupies residues 1-20 (MANHQIKAQRRKDEGKGASR).

Belongs to the bacterial ribosomal protein bL25 family. CTC subfamily. Part of the 50S ribosomal subunit; part of the 5S rRNA/L5/L18/L25 subcomplex. Contacts the 5S rRNA. Binds to the 5S rRNA independently of L5 and L18.

This is one of the proteins that binds to the 5S RNA in the ribosome where it forms part of the central protuberance. In Xylella fastidiosa (strain 9a5c), this protein is Large ribosomal subunit protein bL25.